The chain runs to 251 residues: Prolactin-7B1 (251 aa).

Residues methionine 1–alanine 29 form the signal peptide. A glycan (N-linked (GlcNAc...) asparagine) is linked at asparagine 73. 2 cysteine pairs are disulfide-bonded: cysteine 100–cysteine 216 and cysteine 233–cysteine 241.

Belongs to the somatotropin/prolactin family.

It is found in the secreted. This is Prolactin-7B1 (Prl7b1) from Rattus norvegicus (Rat).